The sequence spans 100 residues: Urease subunit gamma (100 aa).

The protein belongs to the urease gamma subunit family. Heterotrimer of UreA (gamma), UreB (beta) and UreC (alpha) subunits. Three heterotrimers associate to form the active enzyme.

The protein localises to the cytoplasm. The catalysed reaction is urea + 2 H2O + H(+) = hydrogencarbonate + 2 NH4(+). The protein operates within nitrogen metabolism; urea degradation; CO(2) and NH(3) from urea (urease route): step 1/1. This is Urease subunit gamma from Trichormus variabilis (strain ATCC 29413 / PCC 7937) (Anabaena variabilis).